The primary structure comprises 487 residues: G-patch domain and KOW motifs-containing protein (487 aa).

Disordered stretches follow at residues 65–121 (HKNR…PLLM), 181–232 (VKPL…TGSA), and 295–367 (KVHQ…RPEP). A coiled-coil region spans residues 88 to 116 (AVLSQAVKELIEESRRAQEDNSETNQTLS). 2 stretches are compositionally biased toward basic and acidic residues: residues 96 to 106 (ELIEESRRAQE) and 200 to 209 (SALKHLEPQK). The G-patch domain maps to 154 to 200 (VQQYGMAMLRGMGWKEGEGIGRTFKQDVKPLEQKLRPKGLGLGADRS). The region spanning 226–253 (GLGTGSAVQIQSGAYKDMYGKVEGIDPD) is the KOW 1 domain. Composition is skewed to basic and acidic residues over residues 295–333 (KVHQ…DVKL) and 352–367 (RSPE…RPEP). In terms of domain architecture, KOW 2 spans 428-455 (PKEEGEHVMVVLGKYRGMVGKILHRDKQ).

This sequence belongs to the MOS2 family. Component of the minor spliceosome, which splices U12-type introns.

It is found in the nucleus. Its function is as follows. RNA-binding protein involved in pre-mRNA splicing. The protein is G-patch domain and KOW motifs-containing protein (gpkow) of Xenopus laevis (African clawed frog).